The following is a 146-amino-acid chain: Large ribosomal subunit protein uL11 (146 aa).

Belongs to the universal ribosomal protein uL11 family. In terms of assembly, part of the ribosomal stalk of the 50S ribosomal subunit. Interacts with L10 and the large rRNA to form the base of the stalk. L10 forms an elongated spine to which L12 dimers bind in a sequential fashion forming a multimeric L10(L12)X complex. One or more lysine residues are methylated.

Functionally, forms part of the ribosomal stalk which helps the ribosome interact with GTP-bound translation factors. In Treponema pallidum subsp. pallidum (strain SS14), this protein is Large ribosomal subunit protein uL11.